The following is a 262-amino-acid chain: Acyl-[acyl-carrier-protein]--UDP-N-acetylglucosamine O-acyltransferase (262 aa).

This sequence belongs to the transferase hexapeptide repeat family. LpxA subfamily. As to quaternary structure, homotrimer.

It localises to the cytoplasm. The catalysed reaction is a (3R)-hydroxyacyl-[ACP] + UDP-N-acetyl-alpha-D-glucosamine = a UDP-3-O-[(3R)-3-hydroxyacyl]-N-acetyl-alpha-D-glucosamine + holo-[ACP]. It participates in glycolipid biosynthesis; lipid IV(A) biosynthesis; lipid IV(A) from (3R)-3-hydroxytetradecanoyl-[acyl-carrier-protein] and UDP-N-acetyl-alpha-D-glucosamine: step 1/6. Its function is as follows. Involved in the biosynthesis of lipid A, a phosphorylated glycolipid that anchors the lipopolysaccharide to the outer membrane of the cell. In Paracidovorax citrulli (strain AAC00-1) (Acidovorax citrulli), this protein is Acyl-[acyl-carrier-protein]--UDP-N-acetylglucosamine O-acyltransferase.